The following is a 217-amino-acid chain: AFG2-interacting ribosome maturation factor (217 aa).

In terms of assembly, part of the 55LCC heterohexameric ATPase complex composed at least of AIRIM, AFG2A, AFG2B and CINP. Does not associate with pre-60S ribosomal particles. In terms of processing, phosphorylated on serines by CK2 kinase.

The protein localises to the nucleus. Its subcellular location is the cytoplasm. In terms of biological role, part of the 55LCC heterohexameric ATPase complex which is chromatin-associated and promotes replisome proteostasis to maintain replication fork progression and genome stability. Required for replication fork progression, sister chromatid cohesion, and chromosome stability. The ATPase activity is specifically enhanced by replication fork DNA and is coupled to cysteine protease-dependent cleavage of replisome substrates in response to replication fork damage. Uses ATPase activity to process replisome substrates in S-phase, facilitating their proteolytic turnover from chromatin to ensure DNA replication and mitotic fidelity. Involved in the cytoplasmic maturation steps of pre-60S ribosomal particles by promoting the release of shuttling protein RSL24D1/RLP24 from the pre-ribosomal particles. The protein is AFG2-interacting ribosome maturation factor (Airim) of Mus musculus (Mouse).